The sequence spans 214 residues: CASP-like protein 3A1 (214 aa).

At 1-49 the chain is on the cytoplasmic side; that stretch reads MTNGQKIEVAVQLPESKVAATENNETMSGPLVVGGGVAKPFGRKADVMH. A helical transmembrane segment spans residues 50–70; it reads VILRLLCTITSVTAVSFMVTA. The Extracellular segment spans residues 71 to 96; it reads HQSSTVSIYGFMLPVRSKWSFSHSFE. A helical transmembrane segment spans residues 97–117; it reads YLVGVSAAVAAHSLLQLLISM. Over 118–132 the chain is Cytoplasmic; the sequence is SRLLRKSPVIPSRSH. The chain crosses the membrane as a helical span at residues 133 to 153; sequence AWLIFAGDQVFAYAMISAGAA. Residues 154-182 lie on the Extracellular side of the membrane; the sequence is ASGVTNLNRTGIQHTALPNFCKPLNYFCN. The N-linked (GlcNAc...) asparagine glycan is linked to Asn161. A helical membrane pass occupies residues 183–203; that stretch reads HVAVSIAFAFISCLLLAALAV. Topologically, residues 204–214 are cytoplasmic; it reads QEVIWLSKSKY.

The protein belongs to the Casparian strip membrane proteins (CASP) family. As to quaternary structure, homodimer and heterodimers.

The protein localises to the cell membrane. This Ricinus communis (Castor bean) protein is CASP-like protein 3A1.